Reading from the N-terminus, the 312-residue chain is Ornithine carbamoyltransferase (312 aa).

Residues 50–53, Q77, R101, and 128–131 each bind carbamoyl phosphate; these read STRT and HPCQ. L-ornithine is bound by residues N160, D224, and 228–229; that span reads SM. Carbamoyl phosphate contacts are provided by residues 264–265 and R292; that span reads CL.

The protein belongs to the aspartate/ornithine carbamoyltransferase superfamily. OTCase family.

Its subcellular location is the cytoplasm. The catalysed reaction is carbamoyl phosphate + L-ornithine = L-citrulline + phosphate + H(+). Its pathway is amino-acid biosynthesis; L-arginine biosynthesis; L-arginine from L-ornithine and carbamoyl phosphate: step 1/3. In terms of biological role, reversibly catalyzes the transfer of the carbamoyl group from carbamoyl phosphate (CP) to the N(epsilon) atom of ornithine (ORN) to produce L-citrulline. This Leifsonia xyli subsp. xyli (strain CTCB07) protein is Ornithine carbamoyltransferase.